A 536-amino-acid polypeptide reads, in one-letter code: Lipid scramblase CLPTM1L (536 aa).

Over 1–9 (MLSRSSFTS) the chain is Cytoplasmic. A helical transmembrane segment spans residues 10–30 (LAVGVFAVYVAHTCWVMYGIV). The Extracellular segment spans residues 31–284 (YTRPCPSGGA…VKGIFVDTNL (254 aa)). 3 N-linked (GlcNAc...) asparagine glycosylation sites follow: Asn92, Asn102, and Asn229. The chain crosses the membrane as a helical span at residues 285 to 305 (YFLALTFFVAAFHLLFDFLAF). The Cytoplasmic portion of the chain corresponds to 306–324 (KNDISFWKKKRSMIGMSTK). Residues 325–342 (AVLWRCFSTVVIFLFLLD) form a helical membrane-spanning segment. Topologically, residues 343-346 (EQTS) are extracellular. The helical transmembrane segment at 347 to 364 (LLVLIPAGIGAVIELWKV) threads the bilayer. The Cytoplasmic segment spans residues 365–402 (KKALKMTVKWQGIRPKVQFGASNDSEKKTEEYDTQAMK). A helical membrane pass occupies residues 403–423 (YLSYLLYPLCIGGAAYSLLNV). Topologically, residues 424 to 428 (KYKSW) are extracellular. Residues 429–449 (YSWLINSFVNGVYAFGFLFML) form a helical membrane-spanning segment. The Cytoplasmic portion of the chain corresponds to 450–536 (PQLFVNYKMK…YEEKPKKKSS (87 aa)).

This sequence belongs to the CLPTM1 family.

The protein resides in the endoplasmic reticulum membrane. The enzyme catalyses a 6-(alpha-D-glucosaminyl)-1-(1,2-diacyl-sn-glycero-3-phospho)-1D-myo-inositol(in) = a 6-(alpha-D-glucosaminyl)-1-(1,2-diacyl-sn-glycero-3-phospho)-1D-myo-inositol(out). It carries out the reaction 6-(alpha-D-glucosaminyl)-(1-octadecanoyl,2-(9Z)-octadecenoyl-sn-glycero-3-phospho)-1D-myo-inositol(in) = 6-(alpha-D-glucosaminyl)-(1-octadecanoyl,2-(9Z)-octadecenoyl-sn-glycero-3-phospho)-1D-myo-inositol(out). The catalysed reaction is a 1,2-diacyl-sn-glycero-3-phospho-(1D-myo-inositol)(in) = a 1,2-diacyl-sn-glycero-3-phospho-(1D-myo-inositol)(out). It catalyses the reaction a 1,2-diacyl-sn-glycero-3-phosphocholine(in) = a 1,2-diacyl-sn-glycero-3-phosphocholine(out). The enzyme catalyses a 1,2-diacyl-sn-glycero-3-phosphoethanolamine(in) = a 1,2-diacyl-sn-glycero-3-phosphoethanolamine(out). Its function is as follows. Scramblase that mediates the translocation of glucosaminylphosphatidylinositol (alpha-D-GlcN-(1-6)-(1,2-diacyl-sn-glycero-3-phospho)-1D-myo-inositol, GlcN-PI) across the endoplasmic reticulum (ER) membrane, from the cytosolic leaflet to the luminal leaflet of the ER membrane, where it participates in the biosynthesis of glycosylphosphatidylinositol (GPI). GPI is a lipid glycoconjugate involved in post-translational modification of proteins. Can also translocate 1,2-diacyl-sn-glycero-3-phospho-(1D-myo-inositol) (phosphatidylinositol or PI), as well as several other phospholipids (1,2-diacyl-sn-glycero-3-phosphocholine, 1,2-diacyl-sn-glycero-3-phosphoethanolamine), and N-acetylglucosaminylphosphatidylinositol (GlcNAc-PI) in vitro. This Gallus gallus (Chicken) protein is Lipid scramblase CLPTM1L (CLPTM1L).